Here is a 380-residue protein sequence, read N- to C-terminus: Coiled-coil domain-containing protein 74B (380 aa).

3 disordered regions span residues 1–51, 89–108, and 128–202; these read MSGA…KRNL, LIMNQTSQKKDGPSGNHLSR, and GGPS…DVPQ. Residues 34–44 are compositionally biased toward polar residues; sequence LRPQSPQLRQS. The stretch at 47–93 forms a coiled coil; the sequence is QKRNLDLEKSLQFLQQQHSEMLAKLHEEIEHLKRENKDLRYKLIMNQ. The segment covering 141 to 151 has biased composition (basic residues); that stretch reads RTHRPGGKHGR. Over residues 165-182 the composition is skewed to polar residues; it reads DSLSTSSFQSVKSISNSG.

In Homo sapiens (Human), this protein is Coiled-coil domain-containing protein 74B (CCDC74B).